Here is a 220-residue protein sequence, read N- to C-terminus: Polyadenylate-binding protein 2 (220 aa).

The segment at 1 to 24 is disordered; the sequence is MEEEEHEVYGGEIPDVGEMDGDME. Residues 34 to 74 adopt a coiled-coil conformation; it reads AADDDAVKELDEMKKRLKEMEDEAAALREMQAKVEKEMGAQ. A necessary for homooligomerization region spans residues 78 to 219; sequence SIAANQAGKE…FRRPMRYMPY (142 aa). Residues 92 to 168 form the RRM domain; that stretch reads RSVFVGNVDY…RQLKVLQKRT (77 aa). Positions 165 to 172 match the Nuclear localization signal motif; the sequence is QKRTNVPG.

As to quaternary structure, monomer and homooligomer. Binds RNA as a monomer and oligomerizes when bound to poly(A). Forms a complex with cleavage and polyadenylation specificity factor (CPSF) subunits PAPS2, FIPS5, PABN3 and PABN1. Interacts with CSP3.

The protein resides in the nucleus speckle. It is found in the cytoplasm. Its function is as follows. Involved in the 3'-end formation of mRNA precursors (pre-mRNA) by the addition of a poly(A) tail of 200-250 nt to the upstream cleavage product. Stimulates poly(A) polymerase (PAPOLA) conferring processivity on the poly(A) tail elongation reaction and also controls the poly(A) tail length. Increases the affinity of poly(A) polymerase for RNA. Binds to poly(A) and to poly(G) with high affinity. May protect the poly(A) tail from degradation. The sequence is that of Polyadenylate-binding protein 2 from Arabidopsis thaliana (Mouse-ear cress).